A 302-amino-acid chain; its full sequence is RING-H2 finger protein ATL38 (302 aa).

Residues 15–35 (LLVITIILFAIFIVGLASVCF) form a helical membrane-spanning segment. An RING-type; atypical zinc finger spans residues 96-138 (CAVCICEFEDHETLRLMPECCHVFHADCVSVWLSDHSTCPLCR). A disordered region spans residues 279–302 (GEAVAPSKDSRRISVEQSQLDDRV). A compositionally biased stretch (basic and acidic residues) spans 286–302 (KDSRRISVEQSQLDDRV).

This sequence belongs to the RING-type zinc finger family. ATL subfamily.

The protein localises to the membrane. The catalysed reaction is S-ubiquitinyl-[E2 ubiquitin-conjugating enzyme]-L-cysteine + [acceptor protein]-L-lysine = [E2 ubiquitin-conjugating enzyme]-L-cysteine + N(6)-ubiquitinyl-[acceptor protein]-L-lysine.. Its pathway is protein modification; protein ubiquitination. This chain is RING-H2 finger protein ATL38 (ATL38), found in Arabidopsis thaliana (Mouse-ear cress).